A 245-amino-acid chain; its full sequence is Eukaryotic translation initiation factor 6 (245 aa).

A phosphoserine; by CK1 mark is found at serine 174 and serine 175. Serine 231 carries the post-translational modification Phosphoserine.

It belongs to the eIF-6 family. As to quaternary structure, monomer. Associates with the 60S ribosomal subunit. Post-translationally, phosphorylation at Ser-174 and Ser-175 promotes nuclear export.

Its subcellular location is the cytoplasm. The protein localises to the nucleus. It localises to the nucleolus. Its function is as follows. Binds to the 60S ribosomal subunit and prevents its association with the 40S ribosomal subunit to form the 80S initiation complex in the cytoplasm. Is also involved in ribosome biogenesis. Associates with pre-60S subunits in the nucleus and is involved in its nuclear export. Cytoplasmic release of TIF6 from 60S subunits and nuclear relocalization is promoted by the GTPase RIA1/EFL1 and by SDO1. Also required for pre-rRNA processing. This chain is Eukaryotic translation initiation factor 6, found in Saccharomyces cerevisiae (strain ATCC 204508 / S288c) (Baker's yeast).